The primary structure comprises 580 residues: Phosphomethylpyrimidine synthase (580 aa).

Residues 1 to 58 (MTPTQNEIHPKHSYSPIRKHGLEVPETEIALDDSPSGPNEPFRIYRTRGPETDPTLGL) form a disordered region. Residues asparagine 180, methionine 209, tyrosine 238, histidine 274, 294 to 296 (SRG), 335 to 338 (DGLR), and glutamate 374 contribute to the substrate site. Histidine 378 is a binding site for Zn(2+). Residue tyrosine 401 coordinates substrate. Histidine 442 contacts Zn(2+). [4Fe-4S] cluster contacts are provided by cysteine 522, cysteine 525, and cysteine 530. The segment at 554 to 580 (VGASDSTEGMKEKSREFVAGGGEVYRE) is disordered.

It belongs to the ThiC family. Requires [4Fe-4S] cluster as cofactor.

The enzyme catalyses 5-amino-1-(5-phospho-beta-D-ribosyl)imidazole + S-adenosyl-L-methionine = 4-amino-2-methyl-5-(phosphooxymethyl)pyrimidine + CO + 5'-deoxyadenosine + formate + L-methionine + 3 H(+). It functions in the pathway cofactor biosynthesis; thiamine diphosphate biosynthesis. Functionally, catalyzes the synthesis of the hydroxymethylpyrimidine phosphate (HMP-P) moiety of thiamine from aminoimidazole ribotide (AIR) in a radical S-adenosyl-L-methionine (SAM)-dependent reaction. In Corynebacterium efficiens (strain DSM 44549 / YS-314 / AJ 12310 / JCM 11189 / NBRC 100395), this protein is Phosphomethylpyrimidine synthase.